A 291-amino-acid polypeptide reads, in one-letter code: MTRSFPDRLPTNLAFPGISVINQSSFVDLLRRQAPELLPVSLGGGQSGGGQQLSHGTTIVVLKYPGGVVIAGDRRSTQGNMIAGRDVRKVYITDDYTATGIAGIAAVAVEFARLYAVELEHYEKLEGVPLTFAGKVNRLAIMVRSNLTAAMQGLLALPLLAGYDIHAPDPQSAGRIVSFDAAGGWNIEEEGYQSVGSGSIFAKSSIKKLYSQVSDADSALRVAIEALYDAADDDSATGGPDLVRGIYPTAVTIGAEGAAEVTESRIAELAREIIESRSRAYTLGSFGGSEK.

Residues 1–56 (MTRSFPDRLPTNLAFPGISVINQSSFVDLLRRQAPELLPVSLGGGQSGGGQQLSHG) constitute a propeptide, removed in mature form; by autocatalysis. Thr57 functions as the Nucleophile in the catalytic mechanism.

It belongs to the peptidase T1B family. The 20S proteasome core is composed of 14 alpha and 14 beta subunits that assemble into four stacked heptameric rings, resulting in a barrel-shaped structure. The two inner rings, each composed of seven catalytic beta subunits, are sandwiched by two outer rings, each composed of seven alpha subunits. The catalytic chamber with the active sites is on the inside of the barrel. Has a gated structure, the ends of the cylinder being occluded by the N-termini of the alpha-subunits. Is capped by the proteasome-associated ATPase, ARC.

It is found in the cytoplasm. It catalyses the reaction Cleavage of peptide bonds with very broad specificity.. The protein operates within protein degradation; proteasomal Pup-dependent pathway. The formation of the proteasomal ATPase ARC-20S proteasome complex, likely via the docking of the C-termini of ARC into the intersubunit pockets in the alpha-rings, may trigger opening of the gate for substrate entry. Interconversion between the open-gate and close-gate conformations leads to a dynamic regulation of the 20S proteasome proteolysis activity. Functionally, component of the proteasome core, a large protease complex with broad specificity involved in protein degradation. In Mycobacterium leprae (strain Br4923), this protein is Proteasome subunit beta.